We begin with the raw amino-acid sequence, 372 residues long: Alanine dehydrogenase 1 (372 aa).

H94 is a catalytic residue. 170–200 (TYVIFGGGVAATNAANVALGLNAKVIIIELN) lines the NAD(+) pocket.

The protein belongs to the AlaDH/PNT family.

The catalysed reaction is L-alanine + NAD(+) + H2O = pyruvate + NH4(+) + NADH + H(+). Its pathway is amino-acid degradation; L-alanine degradation via dehydrogenase pathway; NH(3) and pyruvate from L-alanine: step 1/1. May play a role in cell wall synthesis as L-alanine is an important constituent of the peptidoglycan layer. The polypeptide is Alanine dehydrogenase 1 (ald1) (Staphylococcus aureus (strain NCTC 8325 / PS 47)).